The chain runs to 563 residues: MDVGELLSYQPNRGTKRPRDDEEEELKTRRKQTGPRERGRYREEEATAAEDTADDKKRLLQIIDRDGEEEEEEEEPLDESSVKKMILTFEKRSYKNQELRIKFPDNPEKFMESELDLNDIIQEMHVVATMPDLYHLLVELSAVQSLLGLLGHDNTDVSIAVVDLLQELTDIDTLHESEEGAEVLIDALVDGQVAALLVQNLERLDESVREEADGVHNTLAIVENMAEFRPEMCTEAAQQGLLQWLLKRLKAKMPFDANKLYCSEVLAILLQDNDENRELLGELDGIDVLLQQLSVFKRHNPSTAEEQEMMENLFDALCSCLMLSSNRERFLKGEGLQLMNLMLREKKVSRSSALKVLDHAMIGPEGTDNCHKFVDILGLRTIFPLFMKSPRKIKKVGTTEKEHEEHVCSILASLLRNLRGQQRTRLLNKFTENDSEKVDRLMELHFKYLSAMQVADKKIEGEKHDIVRRGEIIDNDMEDEFYLRRLDAGLFILQHICYIMAEICNANVPQIRQRVHQILNMRGSSIKIVRHIIKEYAENIGDGRSPEFRETEQKRILALLENF.

At M1 the chain carries N-acetylmethionine. Residues 1-81 form a disordered region; sequence MDVGELLSYQ…EEEEPLDESS (81 aa). The Nuclear localization signal signature appears at 16–33; that stretch reads KRPRDDEEEELKTRRKQT. Positions 34 to 45 are enriched in basic and acidic residues; it reads GPRERGRYREEE. Acidic residues predominate over residues 66–78; it reads DGEEEEEEEEPLD. HEAT repeat units follow at residues 79-129 and 134-176; these read ESSV…VVAT and YHLL…TLHE. K91 carries the post-translational modification N6-acetyllysine. Residues 130–140 carry the Nuclear export signal (NES) motif; sequence MPDLYHLLVEL. ARM repeat units follow at residues 178-228, 229-273, 274-323, 325-363, and 364-417; these read EEGA…MAEF, RPEM…LQDN, DENR…CLML, SNRE…AMIG, and PEGT…LLRN. Position 389 is a phosphoserine (S389). A coiled-coil region spans residues 476 to 540; the sequence is DMEDEFYLRR…HIIKEYAENI (65 aa). S545 bears the Phosphoserine mark.

Component of the PRP19-CDC5L splicing complex composed of a core complex comprising a homotetramer of PRPF19, CDC5L, PLRG1 and BCAS2, and at least three less stably associated proteins CTNNBL1, CWC15 and HSPA8. Interacts directly with CWC15 and CDC5L in the complex. Interacts with AICDA; the interaction is important for the antibody diversification activity of AICDA. Interacts with PRPF31 (via its NLS). Interacts (via its N-terminal NLS) with KPNA1 and KPNA2.

The protein localises to the nucleus. In terms of biological role, component of the PRP19-CDC5L complex that forms an integral part of the spliceosome and is required for activating pre-mRNA splicing. Participates in AID/AICDA-mediated somatic hypermutation (SHM) and class-switch recombination (CSR), 2 processes resulting in the production of high-affinity, mutated isotype-switched antibodies. The chain is Beta-catenin-like protein 1 (Ctnnbl1) from Mus musculus (Mouse).